Reading from the N-terminus, the 211-residue chain is FMN-dependent NADH:quinone oxidoreductase (211 aa).

Residue 17–19 (SYS) coordinates FMN.

Belongs to the azoreductase type 1 family. In terms of assembly, homodimer. It depends on FMN as a cofactor.

It carries out the reaction 2 a quinone + NADH + H(+) = 2 a 1,4-benzosemiquinone + NAD(+). The catalysed reaction is N,N-dimethyl-1,4-phenylenediamine + anthranilate + 2 NAD(+) = 2-(4-dimethylaminophenyl)diazenylbenzoate + 2 NADH + 2 H(+). Functionally, quinone reductase that provides resistance to thiol-specific stress caused by electrophilic quinones. Also exhibits azoreductase activity. Catalyzes the reductive cleavage of the azo bond in aromatic azo compounds to the corresponding amines. This is FMN-dependent NADH:quinone oxidoreductase from Bacillus velezensis (strain DSM 23117 / BGSC 10A6 / LMG 26770 / FZB42) (Bacillus amyloliquefaciens subsp. plantarum).